Consider the following 1342-residue polypeptide: DNA-directed RNA polymerase subunit beta (1342 aa).

The protein belongs to the RNA polymerase beta chain family. In terms of assembly, the RNAP catalytic core consists of 2 alpha, 1 beta, 1 beta' and 1 omega subunit. When a sigma factor is associated with the core the holoenzyme is formed, which can initiate transcription.

It catalyses the reaction RNA(n) + a ribonucleoside 5'-triphosphate = RNA(n+1) + diphosphate. Functionally, DNA-dependent RNA polymerase catalyzes the transcription of DNA into RNA using the four ribonucleoside triphosphates as substrates. The sequence is that of DNA-directed RNA polymerase subunit beta from Glaesserella parasuis serovar 5 (strain SH0165) (Haemophilus parasuis).